Here is a 443-residue protein sequence, read N- to C-terminus: UDP-N-acetylmuramate--L-alanine ligase (443 aa).

110-116 (GAHGKTS) provides a ligand contact to ATP.

The protein belongs to the MurCDEF family.

It is found in the cytoplasm. It carries out the reaction UDP-N-acetyl-alpha-D-muramate + L-alanine + ATP = UDP-N-acetyl-alpha-D-muramoyl-L-alanine + ADP + phosphate + H(+). The protein operates within cell wall biogenesis; peptidoglycan biosynthesis. In terms of biological role, cell wall formation. The chain is UDP-N-acetylmuramate--L-alanine ligase from Streptococcus agalactiae serotype Ia (strain ATCC 27591 / A909 / CDC SS700).